The chain runs to 398 residues: 4-hydroxy-3-methylbut-2-en-1-yl diphosphate synthase (ferredoxin) (398 aa).

Residues Cys306, Cys309, Cys340, and Glu347 each contribute to the [4Fe-4S] cluster site.

The protein belongs to the IspG family. The cofactor is [4Fe-4S] cluster.

The catalysed reaction is (2E)-4-hydroxy-3-methylbut-2-enyl diphosphate + 2 oxidized [2Fe-2S]-[ferredoxin] + H2O = 2-C-methyl-D-erythritol 2,4-cyclic diphosphate + 2 reduced [2Fe-2S]-[ferredoxin] + H(+). The protein operates within isoprenoid biosynthesis; isopentenyl diphosphate biosynthesis via DXP pathway; isopentenyl diphosphate from 1-deoxy-D-xylulose 5-phosphate: step 5/6. Its function is as follows. Converts 2C-methyl-D-erythritol 2,4-cyclodiphosphate (ME-2,4cPP) into 1-hydroxy-2-methyl-2-(E)-butenyl 4-diphosphate. The chain is 4-hydroxy-3-methylbut-2-en-1-yl diphosphate synthase (ferredoxin) from Parasynechococcus marenigrum (strain WH8102).